A 288-amino-acid chain; its full sequence is 4-diphosphocytidyl-2-C-methyl-D-erythritol kinase (288 aa).

Lys-11 is an active-site residue. Residue 95 to 105 (PVAAGMAGGSS) coordinates ATP. The active site involves Asp-137.

The protein belongs to the GHMP kinase family. IspE subfamily.

The catalysed reaction is 4-CDP-2-C-methyl-D-erythritol + ATP = 4-CDP-2-C-methyl-D-erythritol 2-phosphate + ADP + H(+). The protein operates within isoprenoid biosynthesis; isopentenyl diphosphate biosynthesis via DXP pathway; isopentenyl diphosphate from 1-deoxy-D-xylulose 5-phosphate: step 3/6. In terms of biological role, catalyzes the phosphorylation of the position 2 hydroxy group of 4-diphosphocytidyl-2C-methyl-D-erythritol. The polypeptide is 4-diphosphocytidyl-2-C-methyl-D-erythritol kinase (Lachnospira eligens (strain ATCC 27750 / DSM 3376 / VPI C15-48 / C15-B4) (Eubacterium eligens)).